The sequence spans 142 residues: Hemoglobin subunit alpha-A (142 aa).

The Globin domain maps to 2–142 (VLSAADKTNV…VGTVLTAKYR (141 aa)). Residue His-59 participates in O2 binding. Position 88 (His-88) interacts with heme b.

It belongs to the globin family. As to quaternary structure, heterotetramer of two alpha chains and two beta chains. Red blood cells.

Functionally, involved in oxygen transport from the lung to the various peripheral tissues. In Anser indicus (Bar-headed goose), this protein is Hemoglobin subunit alpha-A (HBAA).